The following is a 252-amino-acid chain: Cyclic di-GMP binding protein VCA0042 (252 aa).

The segment covering 1-11 (MNSRPAEKIDN) has biased composition (basic and acidic residues). The tract at residues 1–24 (MNSRPAEKIDNNDGQTETPRSKTV) is disordered. A compositionally biased stretch (polar residues) spans 12–24 (NDGQTETPRSKTV). Residues 134 to 233 (QLRKEPRFEL…EEGRNNAKNL (100 aa)) enclose the PilZ domain.

This sequence belongs to the YcgR family. In terms of assembly, dimer.

The protein resides in the bacterial flagellum basal body. May act as a flagellar brake, regulating swimming and swarming in a bis-(3'-5') cyclic diguanylic acid (c-di-GMP)-dependent manner. Increasing levels of c-di-GMP lead to decreased motility (Potential). Binds bis-(3'-5') cyclic diguanylic acid (c-di-GMP) with a dissociation constant of 170 nM in the presence of 10 mM KCl and with 100 nM in its absence. Binds 1 to 2 c-di-GMP per subunit. Only 1 c-di-GMP is seen in the wild-type crystal, while 2 are seen in the mutant. Depending on the concentration of K(+) stoichiometries of 1:1, 1.43:1 and 2:1 are determined by isothermal titration calorimetry. The sequence is that of Cyclic di-GMP binding protein VCA0042 from Vibrio cholerae serotype O1 (strain ATCC 39315 / El Tor Inaba N16961).